The following is a 382-amino-acid chain: Protein arginine N-methyltransferase 2 (382 aa).

ANK repeat units follow at residues 22–46 (AAQT…FQDD) and 48–80 (LGWS…AVDK). An RMT2 domain is found at 134–382 (KTSAGDNLVF…RLPIAKMSLI (249 aa)). S-adenosyl-L-methionine is bound by residues Phe143, Met177, 205 to 210 (FGLGIV), 228 to 230 (EAH), 255 to 256 (WQ), and Asp284.

It belongs to the class I-like SAM-binding methyltransferase superfamily. RMT2 methyltransferase family. Monomer.

The protein localises to the cytoplasm. The protein resides in the nucleus. In terms of biological role, S-adenosyl-L-methionine-dependent protein-arginine N-methyltransferase that methylates the delta-nitrogen atom of arginine residues to form N5-methylarginine (type IV) in target proteins. Monomethylates ribosomal protein L12. The protein is Protein arginine N-methyltransferase 2 of Cryptococcus neoformans var. neoformans serotype D (strain JEC21 / ATCC MYA-565) (Filobasidiella neoformans).